A 244-amino-acid polypeptide reads, in one-letter code: B3 domain-containing protein At2g36080 (244 aa).

The segment at residues 38–144 (FEKPLTPSDV…RFFIGWRRRG (107 aa)) is a DNA-binding region (TF-B3).

Its subcellular location is the nucleus. The sequence is that of B3 domain-containing protein At2g36080 (ARF31) from Arabidopsis thaliana (Mouse-ear cress).